The sequence spans 486 residues: Betaine aldehyde dehydrogenase (486 aa).

Residues Thr23 and Asp90 each coordinate K(+). 147–149 contributes to the NAD(+) binding site; the sequence is GAW. Lys159 serves as the catalytic Charge relay system. Residues 173-176 and 226-229 contribute to the NAD(+) site; these read KPSE and ESGT. Position 241 (Leu241) interacts with K(+). The active-site Proton acceptor is the Glu247. Positions 249, 281, and 382 each coordinate NAD(+). Cys281 serves as the catalytic Nucleophile. Residue Cys281 is modified to Cysteine sulfenic acid (-SOH). Residues Lys452 and Gly455 each contribute to the K(+) site. Residue Glu459 is the Charge relay system of the active site.

The protein belongs to the aldehyde dehydrogenase family. Dimer of dimers. K(+) is required as a cofactor.

The enzyme catalyses betaine aldehyde + NAD(+) + H2O = glycine betaine + NADH + 2 H(+). The protein operates within amine and polyamine biosynthesis; betaine biosynthesis via choline pathway; betaine from betaine aldehyde: step 1/1. Its function is as follows. Involved in the biosynthesis of the osmoprotectant glycine betaine. Catalyzes the irreversible oxidation of betaine aldehyde to the corresponding acid. In Vibrio vulnificus (strain CMCP6), this protein is Betaine aldehyde dehydrogenase.